The sequence spans 242 residues: MVIIRSFFITGTDTDVGKTVVTSLLTRFLIDMGVNAFPYKPVQSGATTNGARMIPSDAQMYQLVRPEFDVTDFNTYLLEKPCSPHLAADLANITLDRTVITKQVHQLEEAHDAVLIEGAGGLYVPLTNDGYCYIDFMEELNVPTILVSALRVGTINHTVLSIEAMKARNLPIAGIIFNQLQIGNPVIEQSNVETIRKLTDTPILGFVPYSPDIHTVLADDKLRRHLYKDWDKRRFKELIHSD.

Residue 15–20 (DVGKTV) coordinates ATP. T19 lines the Mg(2+) pocket. K40 is an active-site residue. A substrate-binding site is contributed by S44. A Mg(2+)-binding site is contributed by E117. Residues 117 to 120 (EGAG), 178 to 179 (NQ), and 208 to 210 (PYS) contribute to the ATP site.

Belongs to the dethiobiotin synthetase family. Homodimer. It depends on Mg(2+) as a cofactor.

The protein localises to the cytoplasm. It carries out the reaction (7R,8S)-7,8-diammoniononanoate + CO2 + ATP = (4R,5S)-dethiobiotin + ADP + phosphate + 3 H(+). It functions in the pathway cofactor biosynthesis; biotin biosynthesis; biotin from 7,8-diaminononanoate: step 1/2. In terms of biological role, catalyzes a mechanistically unusual reaction, the ATP-dependent insertion of CO2 between the N7 and N8 nitrogen atoms of 7,8-diaminopelargonic acid (DAPA, also called 7,8-diammoniononanoate) to form a ureido ring. The polypeptide is ATP-dependent dethiobiotin synthetase BioD (Halalkalibacterium halodurans (strain ATCC BAA-125 / DSM 18197 / FERM 7344 / JCM 9153 / C-125) (Bacillus halodurans)).